Reading from the N-terminus, the 214-residue chain is Adenylate kinase (214 aa).

10–15 (GAGKGT) serves as a coordination point for ATP. Residues 30 to 59 (STGDMLRAAIKAGTELGKQAKAVIDAGQLV) are NMP. AMP contacts are provided by residues T31, R36, 57 to 59 (QLV), 85 to 88 (GFPR), and Q92. The LID stretch occupies residues 122–159 (GRRAHLPSGRTYHVVYNPPKVEGKDDVTGEDLVVRDDD). ATP contacts are provided by residues R123 and 132-133 (TY). Residues R156 and R167 each coordinate AMP. An ATP-binding site is contributed by K200.

It belongs to the adenylate kinase family. Monomer.

The protein resides in the cytoplasm. It catalyses the reaction AMP + ATP = 2 ADP. It participates in purine metabolism; AMP biosynthesis via salvage pathway; AMP from ADP: step 1/1. Functionally, catalyzes the reversible transfer of the terminal phosphate group between ATP and AMP. Plays an important role in cellular energy homeostasis and in adenine nucleotide metabolism. This Vibrio vulnificus (strain YJ016) protein is Adenylate kinase.